The primary structure comprises 101 residues: Small ribosomal subunit protein uS14 (101 aa).

Belongs to the universal ribosomal protein uS14 family. In terms of assembly, part of the 30S ribosomal subunit. Contacts proteins S3 and S10.

Functionally, binds 16S rRNA, required for the assembly of 30S particles and may also be responsible for determining the conformation of the 16S rRNA at the A site. This Pseudomonas syringae pv. tomato (strain ATCC BAA-871 / DC3000) protein is Small ribosomal subunit protein uS14.